The primary structure comprises 259 residues: tRNA-cytidine(32) 2-sulfurtransferase (259 aa).

Residues 37–42 carry the PP-loop motif motif; sequence SGGKDS. Residues C112, C115, and C202 each contribute to the [4Fe-4S] cluster site.

Belongs to the TtcA family. As to quaternary structure, homodimer. Mg(2+) serves as cofactor. The cofactor is [4Fe-4S] cluster.

It localises to the cytoplasm. The catalysed reaction is cytidine(32) in tRNA + S-sulfanyl-L-cysteinyl-[cysteine desulfurase] + AH2 + ATP = 2-thiocytidine(32) in tRNA + L-cysteinyl-[cysteine desulfurase] + A + AMP + diphosphate + H(+). The protein operates within tRNA modification. Its function is as follows. Catalyzes the ATP-dependent 2-thiolation of cytidine in position 32 of tRNA, to form 2-thiocytidine (s(2)C32). The sulfur atoms are provided by the cysteine/cysteine desulfurase (IscS) system. The polypeptide is tRNA-cytidine(32) 2-sulfurtransferase (Syntrophotalea carbinolica (strain DSM 2380 / NBRC 103641 / GraBd1) (Pelobacter carbinolicus)).